Consider the following 718-residue polypeptide: Exostosin-2 (718 aa).

Residues 1 to 25 (MCASVKSNIRGPALIPRMKTKHRIY) are Cytoplasmic-facing. A helical; Signal-anchor for type II membrane protein transmembrane segment spans residues 26–46 (YVTLFSIVLLGLIATGMFQFW). Over 47–718 (PHSIESSSDG…LKSFPNIGSL (672 aa)) the chain is Lumenal. 4 cysteine pairs are disulfide-bonded: Cys85–Cys90, Cys96–Cys151, Cys286–Cys300, and Cys318–Cys339. Residue Asn288 is glycosylated (N-linked (GlcNAc...) asparagine). Leu461, Arg465, Asn490, and Asn517 together coordinate UDP. UDP-N-acetyl-alpha-D-glucosamine contacts are provided by Arg465, Asn490, Asn517, Arg522, Asp538, Asp539, and Asp540. UDP-binding residues include Asp538 and Asp539. Asp540 provides a ligand contact to Mn(2+). Residues Tyr582 and Ser584 each coordinate a protein. Cys626 and Cys676 are disulfide-bonded. UDP-N-acetyl-alpha-D-glucosamine contacts are provided by Glu627 and Asp628. Asn637 carries N-linked (GlcNAc...) asparagine glycosylation. A protein-binding residues include Lys651 and Lys653. Arg673 lines the UDP-N-acetyl-alpha-D-glucosamine pocket.

The protein belongs to the glycosyltransferase 47 family. Part of the heparan sulfate polymerase, a dimeric complex composed of EXT1 and EXT2. Could also form homooligomeric complexes. Interacts with NDST1. Interacts with GALNT5. Requires Mn(2+) as cofactor. In terms of processing, N-glycosylated at Asn-637. A soluble form is generated by proteolytic processing. Expressed in heart, brain, spleen, lung, liver, skeletal muscle and testis. Heart shows a high expression.

The protein localises to the golgi apparatus membrane. Its subcellular location is the golgi apparatus. It localises to the cis-Golgi network membrane. It is found in the endoplasmic reticulum membrane. The protein resides in the secreted. It carries out the reaction 3-O-{[(1-&gt;4)-beta-D-GlcA-(1-&gt;4)-alpha-D-GlcNAc](n)-(1-&gt;4)-beta-D-GlcA-(1-&gt;3)-beta-D-Gal-(1-&gt;3)-beta-D-Gal-(1-&gt;4)-beta-D-Xyl}-L-seryl-[protein] + UDP-N-acetyl-alpha-D-glucosamine = 3-O-{alpha-D-GlcNAc-[(1-&gt;4)-beta-D-GlcA-(1-&gt;4)-alpha-D-GlcNAc](n)-(1-&gt;4)-beta-D-GlcA-(1-&gt;3)-beta-D-Gal-(1-&gt;3)-beta-D-Gal-(1-&gt;4)-beta-D-Xyl}-L-seryl-[protein] + UDP + H(+). Its pathway is protein modification; protein glycosylation. In terms of biological role, glycosyltransferase forming with EXT1 the heterodimeric heparan sulfate polymerase which catalyzes the elongation of the heparan sulfate glycan backbone. Glycan backbone extension consists in the alternating transfer of (1-&gt;4)-beta-D-GlcA and (1-&gt;4)-alpha-D-GlcNAc residues from their respective UDP-sugar donors. Both EXT1 and EXT2 are required for the full activity of the polymerase since EXT1 bears the N-acetylglucosaminyl-proteoglycan 4-beta-glucuronosyltransferase activity within the complex while EXT2 carries the glucuronosyl-N-acetylglucosaminyl-proteoglycan 4-alpha-N-acetylglucosaminyltransferase activity. Heparan sulfate proteoglycans are ubiquitous components of the extracellular matrix and play an important role in tissue homeostasis and signaling. This chain is Exostosin-2, found in Mus musculus (Mouse).